The primary structure comprises 249 residues: Flagellar brake protein YcgR (249 aa).

The 120-residue stretch at 117–236 folds into the PilZ domain; sequence QRREFFRVDA…ERELQQVIFS (120 aa).

This sequence belongs to the YcgR family. As to quaternary structure, monomer. Interacts with the flagellar basal bodies.

It is found in the bacterial flagellum basal body. In terms of biological role, acts as a flagellar brake, regulating swimming and swarming in a bis-(3'-5') cyclic diguanylic acid (c-di-GMP)-dependent manner. Binds 1 c-di-GMP dimer per subunit. Increasing levels of c-di-GMP lead to decreased motility. In Erwinia tasmaniensis (strain DSM 17950 / CFBP 7177 / CIP 109463 / NCPPB 4357 / Et1/99), this protein is Flagellar brake protein YcgR.